A 118-amino-acid chain; its full sequence is D-dopachrome decarboxylase (118 aa).

Pro-2 carries the N-acetylproline modification.

Belongs to the MIF family. As to quaternary structure, homotrimer.

Its subcellular location is the cytoplasm. It catalyses the reaction D-dopachrome + H(+) = 5,6-dihydroxyindole + CO2. In terms of biological role, tautomerization of D-dopachrome with decarboxylation to give 5,6-dihydroxyindole (DHI). This chain is D-dopachrome decarboxylase (ddt), found in Xenopus tropicalis (Western clawed frog).